We begin with the raw amino-acid sequence, 504 residues long: UDP-N-acetylmuramoylalanine--D-glutamate ligase (504 aa).

ATP is bound at residue 132-138; the sequence is GTNGKTT. A disordered region spans residues 284–310; sequence AQDRDATDEPAPTRRRKSESTAPPDIG.

The protein belongs to the MurCDEF family.

It is found in the cytoplasm. It catalyses the reaction UDP-N-acetyl-alpha-D-muramoyl-L-alanine + D-glutamate + ATP = UDP-N-acetyl-alpha-D-muramoyl-L-alanyl-D-glutamate + ADP + phosphate + H(+). It participates in cell wall biogenesis; peptidoglycan biosynthesis. Its function is as follows. Cell wall formation. Catalyzes the addition of glutamate to the nucleotide precursor UDP-N-acetylmuramoyl-L-alanine (UMA). This Paraburkholderia phymatum (strain DSM 17167 / CIP 108236 / LMG 21445 / STM815) (Burkholderia phymatum) protein is UDP-N-acetylmuramoylalanine--D-glutamate ligase.